A 184-amino-acid polypeptide reads, in one-letter code: Alpha-tubulin N-acetyltransferase (184 aa).

The 174-residue stretch at 1 to 174 (MDTHGEKMKN…NNFVIFAEYF (174 aa)) folds into the N-acetyltransferase domain. Acetyl-CoA-binding positions include 108–121 (FYIR…GLGL) and 144–153 (SHKLRSFLKK).

The protein belongs to the acetyltransferase ATAT1 family.

It catalyses the reaction L-lysyl-[alpha-tubulin] + acetyl-CoA = N(6)-acetyl-L-lysyl-[alpha-tubulin] + CoA + H(+). Functionally, specifically acetylates 'Lys-40' in alpha-tubulin on the lumenal side of microtubules. Promotes microtubule destabilization and accelerates microtubule dynamics; this activity may be independent of acetylation activity. Acetylates alpha-tubulin with a slow enzymatic rate, due to a catalytic site that is not optimized for acetyl transfer. Enters the microtubule through each end and diffuses quickly throughout the lumen of microtubules. Acetylates only long/old microtubules because of its slow acetylation rate since it does not have time to act on dynamically unstable microtubules before the enzyme is released. The polypeptide is Alpha-tubulin N-acetyltransferase (Plasmodium vivax (strain Salvador I)).